Consider the following 892-residue polypeptide: Dipeptidyl peptidase 8 (892 aa).

Catalysis depends on charge relay system residues Ser-749, Asp-827, and His-859.

Belongs to the peptidase S9B family. DPPIV subfamily. In terms of assembly, homodimer. Forms a ternary complex with NLRP1, composed of a DPP8 homodimer, one full-length NLRP1 protein, and one cleaved C-terminus of NLRP1 (NACHT, LRR and PYD domains-containing protein 1, C-terminus). Forms a ternary complex with CARD8, composed of a DPP8 homodimer, one full-length NLRP1 protein, and one cleaved C-terminus of CARD8 (Caspase recruitment domain-containing protein 8, C-terminus). In the ternary complex, only one subunit of the DPP8 homodimer is bound to NLRP1 or CARD8.

The protein localises to the cytoplasm. The catalysed reaction is Release of an N-terminal dipeptide, Xaa-Yaa-|-Zaa-, from a polypeptide, preferentially when Yaa is Pro, provided Zaa is neither Pro nor hydroxyproline.. Its activity is regulated as follows. Inhibited by zinc. Inhibited by the serine proteinase inhibitor 4-(2-aminoethyl)benzenesulphonyl fluoride (AEBSF), and by di-isopropylfluorophosphate. Specifically inhibited by isoindoline derivatives. Inhibited by Val-boroPro (Talabostat, PT-100), a non-selective inhibitor, which triggers pyroptosis in monocytes and macrophages. Functionally, dipeptidyl peptidase that cleaves off N-terminal dipeptides from proteins having a Pro or Ala residue at position 2. Acts as a key inhibitor of caspase-1-dependent monocyte and macrophage pyroptosis in resting cells by preventing activation of NLRP1 and CARD8. Sequesters the cleaved C-terminal part of NLRP1 and CARD8, which respectively constitute the active part of the NLRP1 and CARD8 inflammasomes, in a ternary complex, thereby preventing their oligomerization and activation. The dipeptidyl peptidase activity is required to suppress NLRP1 and CARD8; however, neither NLRP1 nor CARD8 are bona fide substrates of DPP8, suggesting the existence of substrate(s) required for NLRP1 and CARD8 inhibition. This chain is Dipeptidyl peptidase 8, found in Mus musculus (Mouse).